Consider the following 441-residue polypeptide: ATP-dependent protease ATPase subunit HslU (441 aa).

ATP is bound by residues Ile-18, 60-65 (GVGKTE), Asp-254, Glu-319, and Arg-391.

Belongs to the ClpX chaperone family. HslU subfamily. In terms of assembly, a double ring-shaped homohexamer of HslV is capped on each side by a ring-shaped HslU homohexamer. The assembly of the HslU/HslV complex is dependent on binding of ATP.

Its subcellular location is the cytoplasm. ATPase subunit of a proteasome-like degradation complex; this subunit has chaperone activity. The binding of ATP and its subsequent hydrolysis by HslU are essential for unfolding of protein substrates subsequently hydrolyzed by HslV. HslU recognizes the N-terminal part of its protein substrates and unfolds these before they are guided to HslV for hydrolysis. The sequence is that of ATP-dependent protease ATPase subunit HslU from Shewanella pealeana (strain ATCC 700345 / ANG-SQ1).